Consider the following 499-residue polypeptide: Maturase K (499 aa).

It belongs to the intron maturase 2 family. MatK subfamily.

It localises to the plastid. It is found in the chloroplast. Usually encoded in the trnK tRNA gene intron. Probably assists in splicing its own and other chloroplast group II introns. This chain is Maturase K, found in Ceratonia siliqua (Carob).